We begin with the raw amino-acid sequence, 159 residues long: Protein B1 (159 aa).

Residues 1–15 (MQKNMKTKKTKKRGR) show a composition bias toward basic residues. 2 disordered regions span residues 1–100 (MQKN…RTRE) and 133–159 (PGHG…DPPR). Over residues 16–31 (KEGNTPETERRMEPAR) the composition is skewed to basic and acidic residues. Positions 85–96 (RGRHIHTRGART) are enriched in basic residues.

The polypeptide is Protein B1 (B1) (Human herpesvirus 6B (strain Z29) (HHV-6 variant B)).